We begin with the raw amino-acid sequence, 132 residues long: Small ribosomal subunit protein uS11c (132 aa).

The protein belongs to the universal ribosomal protein uS11 family. Part of the 30S ribosomal subunit.

It localises to the plastid. The protein resides in the chloroplast. In Gnetum parvifolium (Small-leaved jointfir), this protein is Small ribosomal subunit protein uS11c.